A 648-amino-acid polypeptide reads, in one-letter code: Beta-glucuronidase (648 aa).

An N-terminal signal peptide occupies residues 1–19; sequence GLAMAWAVLGPLLWGCALA. N-linked (GlcNAc...) asparagine glycosylation is found at Asn170, Asn269, and Asn417. Glu448 acts as the Proton donor in catalysis. Asn628 carries N-linked (GlcNAc...) asparagine glycosylation.

The protein belongs to the glycosyl hydrolase 2 family. In terms of assembly, homotetramer.

Its subcellular location is the lysosome. The enzyme catalyses a beta-D-glucuronoside + H2O = D-glucuronate + an alcohol. Its activity is regulated as follows. Inhibited by L-aspartic acid. Plays an important role in the degradation of dermatan and keratan sulfates. This chain is Beta-glucuronidase (GUSB), found in Chlorocebus aethiops (Green monkey).